The sequence spans 386 residues: Flap endonuclease 1 (386 aa).

The segment at 1-104 is N-domain; that stretch reads MGILGLSKLI…GELAKRAERR (104 aa). Aspartate 34 is a Mg(2+) binding site. DNA-binding residues include arginine 47 and arginine 70. Aspartate 86, glutamate 158, glutamate 160, aspartate 179, and aspartate 181 together coordinate Mg(2+). Positions 122 to 253 are I-domain; the sequence is EIEKFNRRLV…KRAIELINNY (132 aa). Glutamate 158 provides a ligand contact to DNA. Glycine 231 and aspartate 233 together coordinate DNA. Aspartate 233 contributes to the Mg(2+) binding site. The tract at residues 336-344 is interaction with PCNA; that stretch reads TQVRLDSFF. Residues 351–386 form a disordered region; the sequence is PNAVHAAKRKAEEAKKSANNKKAKTSGGAARGRRPK.

The protein belongs to the XPG/RAD2 endonuclease family. FEN1 subfamily. Interacts with PCNA. Three molecules of FEN1 bind to one PCNA trimer with each molecule binding to one PCNA monomer. PCNA stimulates the nuclease activity without altering cleavage specificity. It depends on Mg(2+) as a cofactor. In terms of processing, phosphorylated. Phosphorylation upon DNA damage induces relocalization to the nuclear plasma.

The protein resides in the nucleus. It is found in the nucleolus. Its subcellular location is the nucleoplasm. The protein localises to the mitochondrion. Its function is as follows. Structure-specific nuclease with 5'-flap endonuclease and 5'-3' exonuclease activities involved in DNA replication and repair. During DNA replication, cleaves the 5'-overhanging flap structure that is generated by displacement synthesis when DNA polymerase encounters the 5'-end of a downstream Okazaki fragment. It enters the flap from the 5'-end and then tracks to cleave the flap base, leaving a nick for ligation. Also involved in the long patch base excision repair (LP-BER) pathway, by cleaving within the apurinic/apyrimidinic (AP) site-terminated flap. Acts as a genome stabilization factor that prevents flaps from equilibrating into structures that lead to duplications and deletions. Also possesses 5'-3' exonuclease activity on nicked or gapped double-stranded DNA, and exhibits RNase H activity. Also involved in replication and repair of rDNA and in repairing mitochondrial DNA. The chain is Flap endonuclease 1 from Drosophila persimilis (Fruit fly).